Consider the following 554-residue polypeptide: Solute carrier family 22 member 2 (554 aa).

At 1–21 the chain is on the cytoplasmic side; that stretch reads MPTVDDILEQVGHFHFFQKQT. The helical transmembrane segment at 22-42 threads the bilayer; it reads FFLLALISAAFTPIYVGIVFL. Over 43–149 the chain is Extracellular; that stretch reads GFTPDHRCRS…LVCARSWMLD (107 aa). An N-linked (GlcNAc...) asparagine glycan is attached at Asn-71. The helical transmembrane segment at 150 to 170 threads the bilayer; sequence LFQSAVNIGFFIGSVGIGYLA. The Cytoplasmic portion of the chain corresponds to 171-176; sequence DRFGRK. The helical transmembrane segment at 177-197 threads the bilayer; it reads LCLLVTILINAAAGVLMAVSP. Asn-198 carries an N-linked (GlcNAc...) asparagine glycan. At 198 to 209 the chain is on the extracellular side; that stretch reads NYTWMLIFRLIQ. A helical transmembrane segment spans residues 210 to 230; the sequence is GLVSKAGWLIGYILITEFVGL. Topologically, residues 231–237 are cytoplasmic; it reads NYRRTVG. A helical membrane pass occupies residues 238 to 258; the sequence is ILYQVAFTVGLLVLAGVAYAL. Residues 259–262 lie on the Extracellular side of the membrane; sequence PRWR. A helical transmembrane segment spans residues 263-283; that stretch reads WLQLTVTLPYFCFLLYYWCIP. A Proline-rich sequence motif is present at residues 283–287; the sequence is PESPR. Residues 284-348 are Cytoplasmic-facing; it reads ESPRWLISQN…RTPQIRKHTC (65 aa). The chain crosses the membrane as a helical span at residues 349-369; sequence ILMYNWFTSSVLYQGLIMHLG. The Extracellular portion of the chain corresponds to 370-374; sequence LAGGD. Residues 375-395 form a helical membrane-spanning segment; the sequence is IYLDFFYSALVEFPAAFLIIA. The Cytoplasmic segment spans residues 396-403; sequence TIDRVGRR. The helical transmembrane segment at 404 to 424 threads the bilayer; that stretch reads YPWAVSNMVAGAACLASVFVP. Topologically, residues 425–427 are extracellular; sequence DDL. Residues 428 to 450 traverse the membrane as a helical segment; it reads QGLRITVACLGRMGITMAYEMVC. Residues 451 to 463 lie on the Cytoplasmic side of the membrane; it reads LVNAELYPTFIRN. Residues 464-484 traverse the membrane as a helical segment; sequence LGVLVCSSLCDVGGIVTPFLV. Residues 485 to 493 are Extracellular-facing; it reads YRLTAIWLQ. The helical transmembrane segment at 494–514 threads the bilayer; that stretch reads LPLVVFAVVGLVAGGLVLMLP. The Cytoplasmic segment spans residues 515-554; it reads ETKGRTLPETIEEAENLQRPRKNREKVIYVHVRKADGPLT.

The protein belongs to the major facilitator (TC 2.A.1) superfamily. Organic cation transporter (TC 2.A.1.19) family. In terms of processing, tyrosine phosphorylated. As to expression, expressed in kidney.

The protein localises to the basolateral cell membrane. The protein resides in the basal cell membrane. The catalysed reaction is (R)-noradrenaline(out) = (R)-noradrenaline(in). It carries out the reaction (R)-adrenaline(out) = (R)-adrenaline(in). The enzyme catalyses serotonin(out) = serotonin(in). It catalyses the reaction dopamine(out) = dopamine(in). The catalysed reaction is histamine(out) = histamine(in). It carries out the reaction thiamine(in) = thiamine(out). The enzyme catalyses creatinine(in) = creatinine(out). It catalyses the reaction 1-methylnicotinamide(out) = 1-methylnicotinamide(in). The catalysed reaction is guanidine(out) = guanidine(in). It carries out the reaction choline(out) = choline(in). The enzyme catalyses agmatine(out) = agmatine(in). It catalyses the reaction putrescine(out) = putrescine(in). The catalysed reaction is spermidine(in) = spermidine(out). It carries out the reaction tyramine(in) = tyramine(out). The enzyme catalyses L-histidyl-L-proline diketopiperazine(in) = L-histidyl-L-proline diketopiperazine(out). It catalyses the reaction (R)-salsolinol(in) = (R)-salsolinol(out). The catalysed reaction is N-methyl-(R)-salsolinol(in) = N-methyl-(R)-salsolinol(out). It carries out the reaction acetylcholine(in) = acetylcholine(out). The enzyme catalyses prostaglandin F2alpha(out) = prostaglandin F2alpha(in). It catalyses the reaction prostaglandin E2(out) = prostaglandin E2(in). Its activity is regulated as follows. Tyrosine phosphorylation of the transporter leads to activation of the transport activity. Inhibited by cGMP, most likely through a cGMP-binding protein that interacts with OCT2. Functionally, electrogenic voltage-dependent transporter that mediates the transport of a variety of organic cations such as endogenous bioactive amines, cationic drugs and xenobiotics. Functions as a Na(+)-independent, bidirectional uniporter. Cation cellular uptake or release is driven by the electrochemical potential, i.e. membrane potential and concentration gradient. However, may also engage electroneutral cation exchange when saturating concentrations of cation substrates are reached. Predominantly expressed at the basolateral membrane of hepatocytes and proximal tubules and involved in the uptake and disposition of cationic compounds by hepatic and renal clearance from the blood flow. Implicated in monoamine neurotransmitters uptake such as histamine, dopamine, adrenaline/epinephrine, noradrenaline/norepinephrine, serotonin and tyramine, thereby supporting a physiological role in the central nervous system by regulating interstitial concentrations of neurotransmitters. Also capable of transporting dopaminergic neuromodulators cyclo(his-pro), salsolinol and N-methyl-salsolinol, thereby involved in the maintenance of dopaminergic cell integrity in the central nervous system. Mediates the bidirectional transport of acetylcholine (ACh) at the apical membrane of ciliated cell in airway epithelium, thereby playing a role in luminal release of ACh from bronchial epithelium. Also transports guanidine and endogenous monoamines such as vitamin B1/thiamine, creatinine and N-1-methylnicotinamide (NMN). Mediates the uptake and efflux of quaternary ammonium compound choline. Mediates the bidirectional transport of polyamine agmatine and the uptake of polyamines putrescine and spermidine. Able to transport non-amine endogenous compounds such as prostaglandin E2 (PGE2) and prostaglandin F2-alpha (PGF2-alpha). Also involved in the uptake of xenobiotic 4-(4-(dimethylamino)styryl)-N-methylpyridinium (ASP). May contribute to regulate the transport of organic compounds in testis across the blood-testis-barrier. The sequence is that of Solute carrier family 22 member 2 (SLC22A2) from Oryctolagus cuniculus (Rabbit).